The chain runs to 577 residues: MSEKYVFSEKHPGPLVVEGKLTDAERMKTESNFLRGTIAEDLNDGLTGGFKGDNFLLIRFHGMYQQDDRDIRAERAEQKLEPRHAMLLRCRLPGGVMTPEQWLRIDKFAGESTIYGSIRITNRQTFQYHGILKSNVKPVHQMLNSIGLDALATANDMNRNVLCTSNPIESELHQQAYEWAKKISEHLLPRTRAYAEIWMDQEKVATTDEEPILGSTYLPRKFKTTVVVPPQNDVDLHANDLNFIAIADNGRLVGFNVLVGGGLSIAHGDKATYPRTASELGYISIEHTLAIAEAVVTTQRDWGNRTNRKNAKTKYTLERVGVDNFKQEVEARAGVKFEAVRPYEFTGRGDRIGWVKGIDNKWHLTLFIENGRILDYPGRPLKTGLAEIAKIHKGDFRLTANQNLIIAGVPARSKAKIDALAREHGLIDDSVSEQRKNSMACVSFPTCPLAMAEAERFLPEFVTKVEDIMQQHGVGDEHIVLRVTGCPNGCGRAMLAEIGLVGKAVGRYNLHLGGNREGTRIPRMYRENINETEILAEIDRLIGLWAQDRQPNEGFGDFTIRTNIIRPVLDPARDFYD.

4 residues coordinate [4Fe-4S] cluster: cysteine 441, cysteine 447, cysteine 486, and cysteine 490. Cysteine 490 is a binding site for siroheme.

This sequence belongs to the nitrite and sulfite reductase 4Fe-4S domain family. Alpha(8)-beta(8). The alpha component is a flavoprotein, the beta component is a hemoprotein. It depends on siroheme as a cofactor. The cofactor is [4Fe-4S] cluster.

It carries out the reaction hydrogen sulfide + 3 NADP(+) + 3 H2O = sulfite + 3 NADPH + 4 H(+). It functions in the pathway sulfur metabolism; hydrogen sulfide biosynthesis; hydrogen sulfide from sulfite (NADPH route): step 1/1. Component of the sulfite reductase complex that catalyzes the 6-electron reduction of sulfite to sulfide. This is one of several activities required for the biosynthesis of L-cysteine from sulfate. This chain is Sulfite reductase [NADPH] hemoprotein beta-component 2, found in Pectobacterium carotovorum subsp. carotovorum (strain PC1).